Reading from the N-terminus, the 1041-residue chain is Isoleucine--tRNA ligase (1041 aa).

The 'HIGH' region motif lies at 53–63 (PFANGLPHYGH). Positions 619–623 (KMSKS) match the 'KMSKS' region motif. K622 is an ATP binding site.

Belongs to the class-I aminoacyl-tRNA synthetase family. IleS type 2 subfamily. Monomer. The cofactor is Zn(2+).

It localises to the cytoplasm. It carries out the reaction tRNA(Ile) + L-isoleucine + ATP = L-isoleucyl-tRNA(Ile) + AMP + diphosphate. Catalyzes the attachment of isoleucine to tRNA(Ile). As IleRS can inadvertently accommodate and process structurally similar amino acids such as valine, to avoid such errors it has two additional distinct tRNA(Ile)-dependent editing activities. One activity is designated as 'pretransfer' editing and involves the hydrolysis of activated Val-AMP. The other activity is designated 'posttransfer' editing and involves deacylation of mischarged Val-tRNA(Ile). This Mycobacterium bovis (strain ATCC BAA-935 / AF2122/97) protein is Isoleucine--tRNA ligase.